Reading from the N-terminus, the 40-residue chain is Alpha-conotoxin GIC (40 aa).

Residues 1 to 20 (SDGRNDAAKAFDLISSTVKK) constitute a propeptide that is removed on maturation. Intrachain disulfides connect cysteine 22-cysteine 28 and cysteine 23-cysteine 36. A ser-Xaa-Pro motif, crucial for potent interaction with nAChR region spans residues 24-26 (SHP). Cysteine 36 bears the Cysteine amide mark.

In terms of tissue distribution, expressed by the venom duct.

It is found in the secreted. Its function is as follows. Alpha-conotoxins bind to the nicotinic acetylcholine receptors (nAChR) and inhibit them. This toxin reversibly blocks neuronal nAChRs (alpha-3/beta-2 = alpha-6 or -3/beta-2 or -3 &gt; alpha-3/beta-4 = alpha-4/beta-2). The protein is Alpha-conotoxin GIC of Conus geographus (Geography cone).